We begin with the raw amino-acid sequence, 337 residues long: B1 bradykinin receptor (337 aa).

Residues 1 to 41 are Extracellular-facing; sequence MASEVLLELQPSNRSLQAPANITSCESALEDWDLLYRVLPG. Asn-13 and Asn-21 each carry an N-linked (GlcNAc...) asparagine glycan. A helical transmembrane segment spans residues 42 to 62; sequence FVITICFFGLLGNLLVLSFFL. Residues 63-83 lie on the Cytoplasmic side of the membrane; that stretch reads LPWRQWWWQQRQRQQRLTIAE. The chain crosses the membrane as a helical span at residues 84 to 104; the sequence is IYLANLAASDLVFVLGLPFWA. Over 105–121 the chain is Extracellular; the sequence is ENIGNRFNWPFGTDLCR. An intrachain disulfide couples Cys-120 to Cys-199. A helical membrane pass occupies residues 122-142; sequence VVSGVIKANLFVSIFLVVAIS. The Cytoplasmic portion of the chain corresponds to 143-164; that stretch reads QDRYRLLVYPMTSWGYRRRRQA. Residues 165 to 185 form a helical membrane-spanning segment; it reads QATCLLIWVAGGLLSIPTFLL. The Extracellular segment spans residues 186–217; the sequence is RSVKVVPDLNVSACILLFPHEAWHFARMVELN. Residue Asn-195 is glycosylated (N-linked (GlcNAc...) asparagine). A helical membrane pass occupies residues 218–238; sequence VLGFLLPVTAIIFFNYHILAS. Residues 239 to 261 are Cytoplasmic-facing; the sequence is LRGQKEASRTRCGGPKGSKTTGL. Residues 262-282 form a helical membrane-spanning segment; sequence ILTLVASFLVCWCPYHFFAFL. The Extracellular segment spans residues 283–305; that stretch reads DFLVQVRVIQDCSWKEITDLGLQ. A helical membrane pass occupies residues 306–326; sequence LANFFAFVNSCLNPLIYVFAG. Residues 327–337 lie on the Cytoplasmic side of the membrane; that stretch reads RLLKTRVLGTL.

The protein belongs to the G-protein coupled receptor 1 family. Bradykinin receptor subfamily. BDKRB1 sub-subfamily. In terms of tissue distribution, expressed in bladder, lung, duodenum, kidney, uterus, thymus, salivary gland, testis, prostate, macrophages, aorta, spleen and heart.

The protein resides in the cell membrane. This is a receptor for bradykinin. Could be a factor in chronic pain and inflammation. The protein is B1 bradykinin receptor (Bdkrb1) of Rattus norvegicus (Rat).